Consider the following 247-residue polypeptide: Ribosomal RNA small subunit methyltransferase J (247 aa).

S-adenosyl-L-methionine-binding positions include 101–102 (RD), 117–118 (ER), 153–154 (SS), and Asp171.

The protein belongs to the methyltransferase superfamily. RsmJ family.

It localises to the cytoplasm. It catalyses the reaction guanosine(1516) in 16S rRNA + S-adenosyl-L-methionine = N(2)-methylguanosine(1516) in 16S rRNA + S-adenosyl-L-homocysteine + H(+). In terms of biological role, specifically methylates the guanosine in position 1516 of 16S rRNA. The protein is Ribosomal RNA small subunit methyltransferase J of Photorhabdus laumondii subsp. laumondii (strain DSM 15139 / CIP 105565 / TT01) (Photorhabdus luminescens subsp. laumondii).